The sequence spans 97 residues: Ice-structuring protein (97 aa).

The N-terminal stretch at 1 to 23 is a signal peptide; sequence MALSLFTVGQLIFLFWTLRITEA. A propeptide spans 24 to 48 (removed by a dipeptidylpeptidase); sequence NPDPAAKAAPAAVADPAAAAAAAVA.

The protein belongs to the type-I AFP family. In terms of tissue distribution, detected in blood serum (at protein level).

It is found in the secreted. In terms of biological role, contributes to protect fish blood from freezing at subzero sea water temperatures. Lowers the blood freezing point. Binds to nascent ice crystals and prevents further growth. The chain is Ice-structuring protein from Myzopsetta ferruginea (Yellowtail flounder).